A 533-amino-acid chain; its full sequence is Glucose-6-phosphate isomerase (533 aa).

The active-site Proton donor is the Glu341. Residues His372 and Lys501 contribute to the active site.

It belongs to the GPI family.

It localises to the cytoplasm. The enzyme catalyses alpha-D-glucose 6-phosphate = beta-D-fructose 6-phosphate. It functions in the pathway carbohydrate biosynthesis; gluconeogenesis. It participates in carbohydrate degradation; glycolysis; D-glyceraldehyde 3-phosphate and glycerone phosphate from D-glucose: step 2/4. In terms of biological role, catalyzes the reversible isomerization of glucose-6-phosphate to fructose-6-phosphate. This chain is Glucose-6-phosphate isomerase, found in Cereibacter sphaeroides (strain ATCC 17029 / ATH 2.4.9) (Rhodobacter sphaeroides).